The primary structure comprises 231 residues: Cytochrome c oxidase subunit 2 (231 aa).

Residues 1–14 are Mitochondrial intermembrane-facing; that stretch reads MAHPSQLGLQDAAS. The chain crosses the membrane as a helical span at residues 15-45; the sequence is PVMEELLHFHDHALMIVFLISTLVFYIILAM. Topologically, residues 46 to 59 are mitochondrial matrix; the sequence is MTTKMTDKYILDAQ. The helical transmembrane segment at 60–87 threads the bilayer; the sequence is EIEIVWTLLPAIVLILVALPSLRILYLI. At 88–231 the chain is on the mitochondrial intermembrane side; the sequence is DEVENPHLTI…WSSSMLEEAX (144 aa). 6 residues coordinate Cu cation: His161, Cys196, Glu198, Cys200, His204, and Met207. Glu198 provides a ligand contact to Mg(2+).

It belongs to the cytochrome c oxidase subunit 2 family. As to quaternary structure, component of the cytochrome c oxidase (complex IV, CIV), a multisubunit enzyme composed of 14 subunits. The complex is composed of a catalytic core of 3 subunits MT-CO1, MT-CO2 and MT-CO3, encoded in the mitochondrial DNA, and 11 supernumerary subunits COX4I, COX5A, COX5B, COX6A, COX6B, COX6C, COX7A, COX7B, COX7C, COX8 and NDUFA4, which are encoded in the nuclear genome. The complex exists as a monomer or a dimer and forms supercomplexes (SCs) in the inner mitochondrial membrane with NADH-ubiquinone oxidoreductase (complex I, CI) and ubiquinol-cytochrome c oxidoreductase (cytochrome b-c1 complex, complex III, CIII), resulting in different assemblies (supercomplex SCI(1)III(2)IV(1) and megacomplex MCI(2)III(2)IV(2)). Found in a complex with TMEM177, COA6, COX18, COX20, SCO1 and SCO2. Interacts with TMEM177 in a COX20-dependent manner. Interacts with COX20. Interacts with COX16. Cu cation is required as a cofactor.

It localises to the mitochondrion inner membrane. The enzyme catalyses 4 Fe(II)-[cytochrome c] + O2 + 8 H(+)(in) = 4 Fe(III)-[cytochrome c] + 2 H2O + 4 H(+)(out). In terms of biological role, component of the cytochrome c oxidase, the last enzyme in the mitochondrial electron transport chain which drives oxidative phosphorylation. The respiratory chain contains 3 multisubunit complexes succinate dehydrogenase (complex II, CII), ubiquinol-cytochrome c oxidoreductase (cytochrome b-c1 complex, complex III, CIII) and cytochrome c oxidase (complex IV, CIV), that cooperate to transfer electrons derived from NADH and succinate to molecular oxygen, creating an electrochemical gradient over the inner membrane that drives transmembrane transport and the ATP synthase. Cytochrome c oxidase is the component of the respiratory chain that catalyzes the reduction of oxygen to water. Electrons originating from reduced cytochrome c in the intermembrane space (IMS) are transferred via the dinuclear copper A center (CU(A)) of subunit 2 and heme A of subunit 1 to the active site in subunit 1, a binuclear center (BNC) formed by heme A3 and copper B (CU(B)). The BNC reduces molecular oxygen to 2 water molecules using 4 electrons from cytochrome c in the IMS and 4 protons from the mitochondrial matrix. In Latimeria chalumnae (Coelacanth), this protein is Cytochrome c oxidase subunit 2 (MT-CO2).